Here is a 362-residue protein sequence, read N- to C-terminus: Phenylalanine--tRNA ligase alpha subunit (362 aa).

Mg(2+) is bound at residue E263.

The protein belongs to the class-II aminoacyl-tRNA synthetase family. Phe-tRNA synthetase alpha subunit type 1 subfamily. In terms of assembly, tetramer of two alpha and two beta subunits. Requires Mg(2+) as cofactor.

The protein localises to the cytoplasm. The catalysed reaction is tRNA(Phe) + L-phenylalanine + ATP = L-phenylalanyl-tRNA(Phe) + AMP + diphosphate + H(+). The polypeptide is Phenylalanine--tRNA ligase alpha subunit (Caulobacter sp. (strain K31)).